The following is a 314-amino-acid chain: uncharacterized protein (314 aa).

The N-terminal stretch at 1-24 (MKRRRRWRGWLLFPALCFCLLCEA) is a signal peptide. 14 N-linked (GlcNAc...) asparagine; by host glycosylation sites follow: Asn28, Asn43, Asn57, Asn77, Asn101, Asn102, Asn109, Asn151, Asn170, Asn217, Asn223, Asn252, Asn255, and Asn268. Residues 47–114 (ATTGTTTTSP…TIGTNATSPS (68 aa)) show a composition bias toward low complexity. The interval 47–116 (ATTGTTTTSP…GTNATSPSPS (70 aa)) is disordered.

Belongs to the HHV-5 UL116 protein family. In terms of assembly, interacts with gH. Interacts with UL148. Highly glycosylated.

It is found in the virion. Its subcellular location is the host endoplasmic reticulum. Chaperone protein that cooperates with UL148 to regulate the abundance of gH complexes in virion. First interactor of gH in the host endoplasmic reticulum, regulates the early folding steps of virion assembly. Then, UL148 is recruited and favors the binding of gL. This is an uncharacterized protein from Homo sapiens (Human).